A 354-amino-acid chain; its full sequence is Protein RecA (354 aa).

78–85 (GPESSGKT) lines the ATP pocket.

This sequence belongs to the RecA family.

The protein localises to the cytoplasm. Can catalyze the hydrolysis of ATP in the presence of single-stranded DNA, the ATP-dependent uptake of single-stranded DNA by duplex DNA, and the ATP-dependent hybridization of homologous single-stranded DNAs. It interacts with LexA causing its activation and leading to its autocatalytic cleavage. This chain is Protein RecA, found in Zymomonas mobilis subsp. mobilis (strain ATCC 31821 / ZM4 / CP4).